The following is a 364-amino-acid chain: Probable G-protein coupled receptor AH9.4 (364 aa).

Position 1 (Met-1) is a topological domain, extracellular. The helical transmembrane segment at 2–22 (AFLQSAYLVMVFTVPIAGVIL) threads the bilayer. Residues 23 to 48 (NTYVLRKLIRVARKSVVRFETTSGLP) lie on the Cytoplasmic side of the membrane. Residues 49 to 69 (LAAMSVGDSITLCALLMQAIF) form a helical membrane-spanning segment. The Extracellular segment spans residues 70–89 (HITPKGEVPTVVLSSICKFG). A helical membrane pass occupies residues 90-110 (IFLIHSTSAFSVWCWFFLSVL). Residues 111 to 130 (RYIAVFHPFKYRTIWRQPRN) are Cytoplasmic-facing. The helical transmembrane segment at 131–151 (ALKFLAGAVGMFQIYTLIFVT) threads the bilayer. Residues 152–177 (YRQEEKSCGEYDVFHESAFKHVHLLD) lie on the Extracellular side of the membrane. The helical transmembrane segment at 178–198 (IFLFYAIPSLLRITLDFLVLI) threads the bilayer. At 199-277 (HCYSPFSVEG…KKKTAMVMRS (79 aa)) the chain is on the cytoplasmic side. The helical transmembrane segment at 278-298 (ILISVLNLLLNLPSHIFRAWA) threads the bilayer. Topologically, residues 299-315 (SYDESSLENEIVRTLEP) are extracellular. Residues 316–336 (IAQMMYFSQFACNAFYLATSI) form a helical membrane-spanning segment. The Cytoplasmic segment spans residues 337–364 (YETNGSPRNTVISSSNRHVSRCISDDEA).

Belongs to the G-protein coupled receptor 1 family.

It localises to the cell membrane. Not known. Putative receptor. This chain is Probable G-protein coupled receptor AH9.4, found in Caenorhabditis elegans.